We begin with the raw amino-acid sequence, 441 residues long: Phenoloxidase-activating enzyme (441 aa).

An N-terminal signal peptide occupies residues 1-21 (MFLIWTFIVAVLAIQTKSVVA). Glutamine 22 is subject to Pyrrolidone carboxylic acid. Clip domains are found at residues 23–76 (SCRT…AVCC) and 77–127 (PCNA…SICC). 8 cysteine pairs are disulfide-bonded: cysteine 24-cysteine 75, cysteine 34-cysteine 65, cysteine 40-cysteine 76, cysteine 78-cysteine 126, cysteine 88-cysteine 117, cysteine 94-cysteine 127, cysteine 164-cysteine 305, and cysteine 203-cysteine 219. Residues 174 to 440 (IVGGAPASID…YLPWIQNTIE (267 aa)) form the Peptidase S1 domain. The active-site Charge relay system is the histidine 218. Glutamate 237, asparagine 239, asparagine 242, and aspartate 246 together coordinate Ca(2+). A glycan (N-linked (GlcNAc...) asparagine) is linked at asparagine 239. Aspartate 285 serves as the catalytic Charge relay system. N-linked (GlcNAc...) asparagine glycosylation is present at asparagine 334. 2 disulfide bridges follow: cysteine 356–cysteine 377 and cysteine 387–cysteine 416. The active-site Charge relay system is serine 391.

This sequence belongs to the peptidase S1 family. CLIP subfamily. In terms of assembly, in the active form, heterodimer of a light chain and a heavy chain; disulfide-linked. Post-translationally, proteolytically cleaved for activation. Cleavage produces a light chain and a catalytic heavy chain which remains covalently associated probably through an interchain disulfide bond. Glycosylated.

With respect to regulation, stabilized by calcium. Inhibited by di-isopropyl phosphorofluoridate (DFP), phenylmethanesulfonylfluoride (PMSF), p-nitrophenyl-p'-guanidinobenzonate (p-NPGB), p-chloromercuribenzoate (PCMB), ethylenediaminetetraacetic acid (EDTA), urea and CI-13c. Endopeptidase with selective post-Arg cleavage site. Activates prophenoloxidase. Has a probable role in the melanization process as part of the innate immune response. The polypeptide is Phenoloxidase-activating enzyme (Bombyx mori (Silk moth)).